A 341-amino-acid chain; its full sequence is Probable galacturonosyltransferase-like 2 (341 aa).

Residues 1–4 are Cytoplasmic-facing; it reads MHSK. Residues 5-22 traverse the membrane as a helical; Signal-anchor for type II membrane protein segment; that stretch reads FILYLSILAVFTVSFAGG. Residues 23 to 341 lie on the Lumenal side of the membrane; that stretch reads ERFKEAPKFF…LESRFDLIES (319 aa). Asn190 is a glycosylation site (N-linked (GlcNAc...) asparagine).

This sequence belongs to the glycosyltransferase 8 family.

It localises to the golgi apparatus membrane. It functions in the pathway glycan metabolism; pectin biosynthesis. In terms of biological role, may be involved in pectin and/or xylans biosynthesis in cell walls. This chain is Probable galacturonosyltransferase-like 2 (GATL2), found in Arabidopsis thaliana (Mouse-ear cress).